Consider the following 378-residue polypeptide: MSHLDNGFRSLTLQRFPATDDVNPLQAWEAADEYLLQQLDDTEIRGPVLILNDAFGALSCALAEHKPYSIGDSYISELATRENLRLNGIDESSVKFLDSTADYPQQPGVVLIKVPKTLALLEQQLRALRKVVTPDTRIIAGAKARDIHTSTLELFEKVLGPTTTTLAWKKARLINCTFNEPPLADAPQTVSWKLEGTDWTIHNHANVFSRTGLDIGARFFMQHLPENLEGEIVDLGCGNGVIGLTLLDKNPQAKVVFVDESPMAVASSRLNVETNMPEALDRCEFMINNALSGVEPFRFNAVLCNPPFHQQHALTDNVAWEMFHHARRCLKINGELYIVANRHLDYFHKLKKIFGNCTTIATNNKFVVLKAVKLGRRR.

Belongs to the methyltransferase superfamily. RlmG family.

The protein localises to the cytoplasm. It catalyses the reaction guanosine(1835) in 23S rRNA + S-adenosyl-L-methionine = N(2)-methylguanosine(1835) in 23S rRNA + S-adenosyl-L-homocysteine + H(+). Its function is as follows. Specifically methylates the guanine in position 1835 (m2G1835) of 23S rRNA. The sequence is that of Ribosomal RNA large subunit methyltransferase G from Escherichia coli O1:K1 / APEC.